We begin with the raw amino-acid sequence, 403 residues long: Serine/threonine-protein phosphatase 4 regulatory subunit 2-A (403 aa).

3 stretches are compositionally biased toward polar residues: residues 140 to 149, 156 to 170, and 183 to 196; these read EKNNSTSLNR, PSNSQSYTDRSNVNG, and SLSSPMNTNGLPDS. The tract at residues 140-403 is disordered; it reads EKNNSTSLNR…DAPEEPMEQD (264 aa). A compositionally biased stretch (basic and acidic residues) spans 197 to 211; the sequence is TENKESDLQQKEKSQ. Composition is skewed to polar residues over residues 212-226 and 371-387; these read SDSAVSDDGSQATTS and ATSSGKSTETLTLSPME. The segment covering 388 to 403 has biased composition (acidic residues); the sequence is NSEEATDAPEEPMEQD.

The protein belongs to the PPP4R2 family. As to quaternary structure, serine/threonine-protein phosphatase 4 (PP4) occurs in different assemblies of the catalytic and one or more regulatory subunits.

Its function is as follows. Regulatory subunit of serine/threonine-protein phosphatase 4 (PP4). This chain is Serine/threonine-protein phosphatase 4 regulatory subunit 2-A (ppp4r2-a), found in Xenopus laevis (African clawed frog).